The primary structure comprises 207 residues: Large ribosomal subunit protein bL25 (207 aa).

It belongs to the bacterial ribosomal protein bL25 family. CTC subfamily. In terms of assembly, part of the 50S ribosomal subunit; part of the 5S rRNA/L5/L18/L25 subcomplex. Contacts the 5S rRNA. Binds to the 5S rRNA independently of L5 and L18.

In terms of biological role, this is one of the proteins that binds to the 5S RNA in the ribosome where it forms part of the central protuberance. This chain is Large ribosomal subunit protein bL25, found in Brucella canis (strain ATCC 23365 / NCTC 10854 / RM-666).